We begin with the raw amino-acid sequence, 223 residues long: Deoxyribose-phosphate aldolase (223 aa).

Aspartate 92 functions as the Proton donor/acceptor in the catalytic mechanism. Lysine 158 acts as the Schiff-base intermediate with acetaldehyde in catalysis. Lysine 188 serves as the catalytic Proton donor/acceptor.

Belongs to the DeoC/FbaB aldolase family. DeoC type 1 subfamily.

It is found in the cytoplasm. The catalysed reaction is 2-deoxy-D-ribose 5-phosphate = D-glyceraldehyde 3-phosphate + acetaldehyde. The protein operates within carbohydrate degradation; 2-deoxy-D-ribose 1-phosphate degradation; D-glyceraldehyde 3-phosphate and acetaldehyde from 2-deoxy-alpha-D-ribose 1-phosphate: step 2/2. In terms of biological role, catalyzes a reversible aldol reaction between acetaldehyde and D-glyceraldehyde 3-phosphate to generate 2-deoxy-D-ribose 5-phosphate. The sequence is that of Deoxyribose-phosphate aldolase from Mycolicibacterium paratuberculosis (strain ATCC BAA-968 / K-10) (Mycobacterium paratuberculosis).